The primary structure comprises 214 residues: FMN-dependent NADH:quinone oxidoreductase 1 (214 aa).

FMN contacts are provided by residues serine 17–serine 19 and serine 144–glycine 147.

This sequence belongs to the azoreductase type 1 family. Homodimer. FMN serves as cofactor.

It catalyses the reaction 2 a quinone + NADH + H(+) = 2 a 1,4-benzosemiquinone + NAD(+). The catalysed reaction is N,N-dimethyl-1,4-phenylenediamine + anthranilate + 2 NAD(+) = 2-(4-dimethylaminophenyl)diazenylbenzoate + 2 NADH + 2 H(+). Its function is as follows. Quinone reductase that provides resistance to thiol-specific stress caused by electrophilic quinones. Functionally, also exhibits azoreductase activity. Catalyzes the reductive cleavage of the azo bond in aromatic azo compounds to the corresponding amines. This is FMN-dependent NADH:quinone oxidoreductase 1 from Lactococcus lactis subsp. lactis (strain IL1403) (Streptococcus lactis).